The chain runs to 158 residues: Small ribosomal subunit protein uS7 (158 aa).

This sequence belongs to the universal ribosomal protein uS7 family. Part of the 30S ribosomal subunit. Contacts proteins S9 and S11.

One of the primary rRNA binding proteins, it binds directly to 16S rRNA where it nucleates assembly of the head domain of the 30S subunit. Is located at the subunit interface close to the decoding center, probably blocks exit of the E-site tRNA. This is Small ribosomal subunit protein uS7 from Gluconobacter oxydans (strain 621H) (Gluconobacter suboxydans).